Consider the following 259-residue polypeptide: Insulin-like growth factor-binding protein 4 (259 aa).

Positions 1 to 22 (MLPLCLVAALLLSASGPRPSLG) are cleaved as a signal peptide. The IGFBP N-terminal domain maps to 24 to 104 (EAIHCPPCSE…MHGQGLCMEL (81 aa)). 6 disulfide bridges follow: cysteine 28–cysteine 54, cysteine 31–cysteine 56, cysteine 39–cysteine 57, cysteine 45–cysteine 60, cysteine 68–cysteine 81, and cysteine 75–cysteine 101. Residues 115–136 (QPSDKDEGDHPNNSFSPCSPQD) are disordered. N-linked (GlcNAc...) asparagine glycosylation occurs at asparagine 126. Intrachain disulfides connect cysteine 132/cysteine 139, cysteine 175/cysteine 205, cysteine 216/cysteine 227, and cysteine 229/cysteine 250. The 79-residue stretch at 172-250 (QGSCQSELHR…GLEPKGELDC (79 aa)) folds into the Thyroglobulin type-1 domain. Residue serine 256 is modified to Phosphoserine.

In terms of assembly, binds IGF2 more than IGF1.

It localises to the secreted. Functionally, IGF-binding proteins prolong the half-life of the IGFs and have been shown to either inhibit or stimulate the growth promoting effects of the IGFs on cell culture. They alter the interaction of IGFs with their cell surface receptors. The sequence is that of Insulin-like growth factor-binding protein 4 (IGFBP4) from Sus scrofa (Pig).